The chain runs to 194 residues: Naphthalene 1,2-dioxygenase system, small oxygenase component (194 aa).

It belongs to the bacterial ring-hydroxylating dioxygenase beta subunit family. In terms of assembly, the naphthalene dioxygenase (NDO) multicomponent enzyme system is composed of an electron transfer component and a dioxygenase component (iron sulfur protein (ISP)). The electron transfer component is composed of a ferredoxin reductase (NagAa) and a ferredoxin (NagAb), and the dioxygenase component is formed by a large alpha subunit (NagAc) and a small beta subunit (NagAd).

The protein operates within aromatic compound metabolism; naphthalene degradation. Its function is as follows. Component of the naphthalene dioxygenase (NDO) multicomponent enzyme system which catalyzes the incorporation of both atoms of molecular oxygen into naphthalene to form cis-(1R,2S)-dihydroxy-1,2-dihydronaphthalene. Also able to use styrene as substrate. The beta subunit seems to have a structural role in the holoenzyme. The chain is Naphthalene 1,2-dioxygenase system, small oxygenase component from Ralstonia sp.